Reading from the N-terminus, the 65-residue chain is DNA-directed RNA polymerase subunit omega (65 aa).

The protein belongs to the RNA polymerase subunit omega family. The RNAP catalytic core consists of 2 alpha, 1 beta, 1 beta' and 1 omega subunit. When a sigma factor is associated with the core the holoenzyme is formed, which can initiate transcription.

It carries out the reaction RNA(n) + a ribonucleoside 5'-triphosphate = RNA(n+1) + diphosphate. Promotes RNA polymerase assembly. Latches the N- and C-terminal regions of the beta' subunit thereby facilitating its interaction with the beta and alpha subunits. This is DNA-directed RNA polymerase subunit omega from Baumannia cicadellinicola subsp. Homalodisca coagulata.